The primary structure comprises 236 residues: 7-cyano-7-deazaguanine synthase (236 aa).

7 to 17 (CSGGLDSVSLA) lines the ATP pocket. Zn(2+) contacts are provided by cysteine 185, cysteine 193, cysteine 196, and cysteine 199.

It belongs to the QueC family. Requires Zn(2+) as cofactor.

The enzyme catalyses 7-carboxy-7-deazaguanine + NH4(+) + ATP = 7-cyano-7-deazaguanine + ADP + phosphate + H2O + H(+). It functions in the pathway purine metabolism; 7-cyano-7-deazaguanine biosynthesis. In terms of biological role, catalyzes the ATP-dependent conversion of 7-carboxy-7-deazaguanine (CDG) to 7-cyano-7-deazaguanine (preQ(0)). The polypeptide is 7-cyano-7-deazaguanine synthase (Rhizobium meliloti (strain 1021) (Ensifer meliloti)).